The sequence spans 223 residues: DNA mismatch repair protein MutH (223 aa).

This sequence belongs to the MutH family.

Its subcellular location is the cytoplasm. In terms of biological role, sequence-specific endonuclease that cleaves unmethylated GATC sequences. It is involved in DNA mismatch repair. The protein is DNA mismatch repair protein MutH of Haemophilus influenzae (strain 86-028NP).